The chain runs to 85 residues: Toxin To9 (85 aa).

An N-terminal signal peptide occupies residues 1 to 19 (MNYSTLIAVASLLTAGTES). Residues 21 to 81 (KDGYPVKEGD…AAIKGYGRCR (61 aa)) form the LCN-type CS-alpha/beta domain. 4 disulfides stabilise this stretch: Cys31-Cys80, Cys35-Cys56, Cys42-Cys63, and Cys46-Cys65. Position 82 is a proline amide (Pro82).

This sequence belongs to the long (4 C-C) scorpion toxin superfamily. Sodium channel inhibitor family. Alpha subfamily. Expressed by the venom gland.

It is found in the secreted. Its function is as follows. Alpha toxins bind voltage-independently at site-3 of sodium channels (Nav) and inhibit the inactivation of the activated channels, thereby blocking neuronal transmission. This chain is Toxin To9, found in Tityus obscurus (Amazonian scorpion).